The following is a 137-amino-acid chain: Putative pre-16S rRNA nuclease (137 aa).

Belongs to the YqgF nuclease family.

It is found in the cytoplasm. Functionally, could be a nuclease involved in processing of the 5'-end of pre-16S rRNA. The sequence is that of Putative pre-16S rRNA nuclease from Clostridium kluyveri (strain NBRC 12016).